The primary structure comprises 478 residues: Cytochrome c-552 (478 aa).

The first 26 residues, 1 to 26, serve as a signal peptide directing secretion; the sequence is MARKTLRARRFFSLIFPFFFITSVYA. H94 lines the heme c pocket. Residues C122, C125, and K126 each coordinate heme. Positions 160, 163, 164, 209, 212, and 213 each coordinate heme c. Ca(2+) contacts are provided by E215, Y216, K261, and Q263. Substrate is bound at residue Y216. H264 contributes to the substrate binding site. Residues H275, C282, C285, H286, H301, C314, C317, H318, and H393 each contribute to the heme c site.

It belongs to the cytochrome c-552 family. It depends on Ca(2+) as a cofactor. Heme c serves as cofactor.

It is found in the periplasm. The catalysed reaction is 6 Fe(III)-[cytochrome c] + NH4(+) + 2 H2O = 6 Fe(II)-[cytochrome c] + nitrite + 8 H(+). It participates in nitrogen metabolism; nitrate reduction (assimilation). Catalyzes the reduction of nitrite to ammonia, consuming six electrons in the process. This Salmonella dublin (strain CT_02021853) protein is Cytochrome c-552.